A 589-amino-acid polypeptide reads, in one-letter code: MAPGRSGYRLRFRSGARISGDSEQTQGFVQEPGSCAEDPGGIVLKRVIVIDNYDSFVYNIVQYIGEVEPDCEIEVFRNDEITIEEIERKNPTHIVISPGPGRPEEAGISVDVVRHFSGKVPILGVCLGHQVIGYAFGGKIVHAKRILHGKTSKIVHNGKGVFSGVKNPLVATRYHSLVVEEASLPEVLEITAKSDDGEIMGLQHKEHPTFGVQFHPESVLTEEGKRIIKNFLNIQDIQVKKVSEETEIDIVSALKKLVEFEDLTFEESRQVMNFIMSGNATDAQIAGFLVALRMKEETGDELGGMASVMREKSIHIKAPSPRTVDTCGTGGDGFGTFNISTTTAFVVAAAGIPVAKHGNRSVSSKVGSADVLEAGGYKLEKTPEEMERELKETGFSFLFAPLLHPAMKHVMPARRQLKIRTAFNLLGPITNPARVKYQVVGVFDLSFASKLATALQRLGTERSAVVNGGFTDELTTCGKNNLLLVTQEEIVPMVLDPEELGLKSGDPEELKGPSDPKEAYRMMESVLKGEASRTQVETVALNAGVVFWLVGECDTIKDGVGKALDLIRTGEAYKKLREVMDYQKTLGNS.

The Glutamine amidotransferase type-1 domain occupies 46-241 (RVIVIDNYDS…LNIQDIQVKK (196 aa)). 99-101 (GPG) serves as a coordination point for L-glutamine. Cysteine 126 functions as the Nucleophile; for GATase activity in the catalytic mechanism. Residues glutamine 130 and 176–177 (SL) each bind L-glutamine. Catalysis depends on for GATase activity residues histidine 215 and glutamate 217. An anthranilate phosphoribosyltransferase region spans residues 253-589 (ALKKLVEFED…MDYQKTLGNS (337 aa)).

This sequence in the C-terminal section; belongs to the anthranilate phosphoribosyltransferase family. As to quaternary structure, heterotetramer consisting of two non-identical subunits: a beta subunit (TrpG) and a large alpha subunit (TrpE).

It carries out the reaction chorismate + L-glutamine = anthranilate + pyruvate + L-glutamate + H(+). It catalyses the reaction N-(5-phospho-beta-D-ribosyl)anthranilate + diphosphate = 5-phospho-alpha-D-ribose 1-diphosphate + anthranilate. The protein operates within amino-acid biosynthesis; L-tryptophan biosynthesis; L-tryptophan from chorismate: step 1/5. It functions in the pathway amino-acid biosynthesis; L-tryptophan biosynthesis; L-tryptophan from chorismate: step 2/5. Its function is as follows. Part of a heterotetrameric complex that catalyzes the two-step biosynthesis of anthranilate, an intermediate in the biosynthesis of L-tryptophan. In the first step, the glutamine-binding beta subunit (TrpG) of anthranilate synthase (AS) provides the glutamine amidotransferase activity which generates ammonia as a substrate that, along with chorismate, is used in the second step, catalyzed by the large alpha subunit of AS (TrpE) to produce anthranilate. In the absence of TrpG, TrpE can synthesize anthranilate directly from chorismate and high concentrations of ammonia. In addition to synthesizing anthranilate, it also catalyzes the second step of the pathway, the transfer of the phosphoribosyl group of 5-phosphorylribose-1-pyrophosphate (PRPP) to anthranilate. The sequence is that of Bifunctional protein TrpGD (trpGD) from Thermotoga maritima (strain ATCC 43589 / DSM 3109 / JCM 10099 / NBRC 100826 / MSB8).